Here is a 134-residue protein sequence, read N- to C-terminus: Translation initiation factor 2 subunit beta (134 aa).

The protein belongs to the eIF-2-beta/eIF-5 family. In terms of assembly, heterotrimer composed of an alpha, a beta and a gamma chain.

In terms of biological role, eIF-2 functions in the early steps of protein synthesis by forming a ternary complex with GTP and initiator tRNA. In Pyrobaculum arsenaticum (strain DSM 13514 / JCM 11321 / PZ6), this protein is Translation initiation factor 2 subunit beta.